We begin with the raw amino-acid sequence, 540 residues long: Protein dml-1 (540 aa).

Residues 517 to 540 (NELAEMADEYHEGWSSGSDDGDDD) are disordered.

Belongs to the misato family.

The protein resides in the mitochondrion. In terms of biological role, involved in the partitioning of the mitochondrial organelle and mitochondrial DNA (mtDNA) inheritance. This Neurospora crassa (strain ATCC 24698 / 74-OR23-1A / CBS 708.71 / DSM 1257 / FGSC 987) protein is Protein dml-1 (dml-1).